The sequence spans 138 residues: ATP synthase epsilon chain (138 aa).

Belongs to the ATPase epsilon chain family. As to quaternary structure, F-type ATPases have 2 components, CF(1) - the catalytic core - and CF(0) - the membrane proton channel. CF(1) has five subunits: alpha(3), beta(3), gamma(1), delta(1), epsilon(1). CF(0) has three main subunits: a, b and c.

It is found in the cell inner membrane. In terms of biological role, produces ATP from ADP in the presence of a proton gradient across the membrane. This chain is ATP synthase epsilon chain, found in Geobacter metallireducens (strain ATCC 53774 / DSM 7210 / GS-15).